The primary structure comprises 196 residues: Putative NADH dehydrogenase/NAD(P)H nitroreductase Pnuc_0932 (196 aa).

Belongs to the nitroreductase family. HadB/RutE subfamily. The cofactor is FMN.

The protein is Putative NADH dehydrogenase/NAD(P)H nitroreductase Pnuc_0932 of Polynucleobacter asymbioticus (strain DSM 18221 / CIP 109841 / QLW-P1DMWA-1) (Polynucleobacter necessarius subsp. asymbioticus).